A 633-amino-acid polypeptide reads, in one-letter code: Chitinase 2 (633 aa).

Positions 151–602 (PKLSAYITDW…NAAREGLGYV (452 aa)) constitute a GH18 domain. Residues 275–276 (QN) and 306–309 (GGWS) contribute to the chitin site. Glutamate 349 serves as the catalytic Proton donor. Residues tyrosine 350, 422-425 (MSYD), and tryptophan 582 contribute to the chitin site.

It belongs to the glycosyl hydrolase 18 family. As to quaternary structure, semipurified toxin complex consists of at least YenA1-YenA2-YenB-YenC1-YenC2-Chi1-Chi2. The Yen-TC:K9 subcomplex is about 26 nm tall and 22 nm in diameter with 5-fold symmetry and 5 copies of YenA1, YenA2, Chi1 and Chi2; the chitinase subunits may be solvent accessible on the exterior the complex. The Yen-TC:K9 subcomplex has no insecticidal activity. The native complex with additional YenB, YenC1 and YenC2 subunits is 16 nm taller and is insecticidal; the toxicity-conferring subunits are present at about 1 copy each.

It is found in the secreted. It catalyses the reaction Random endo-hydrolysis of N-acetyl-beta-D-glucosaminide (1-&gt;4)-beta-linkages in chitin and chitodextrins.. Toxin complex is secreted when grown at 25 degrees Celsius or less; at higher temperatures the proteins are present intracellularly but not secreted. Its function is as follows. Part of an orally active toxin complex (TC) with strong insecticidal effects on larvae of the Coleoptera Costelytra zealandica, Acrossidius tasmania and Adoryphorus couloni and some Lepidoptera larvae. The TC has an endochitinase activity. This subunit might aid infection by degradation of the larval peritrophic membrane. In Yersinia entomophaga, this protein is Chitinase 2.